A 125-amino-acid chain; its full sequence is Meiotically up-regulated gene 112 protein (125 aa).

The protein resides in the golgi apparatus. In terms of biological role, has a role in meiosis. The sequence is that of Meiotically up-regulated gene 112 protein (mug112) from Schizosaccharomyces pombe (strain 972 / ATCC 24843) (Fission yeast).